The primary structure comprises 183 residues: Alkyl hydroperoxide reductase AhpD (183 aa).

The active-site Proton donor is C132. C132 and C135 are disulfide-bonded. C135 (cysteine sulfenic acid (-SOH) intermediate) is an active-site residue.

This sequence belongs to the AhpD family.

It catalyses the reaction N(6)-[(R)-dihydrolipoyl]-L-lysyl-[lipoyl-carrier protein] + a hydroperoxide = N(6)-[(R)-lipoyl]-L-lysyl-[lipoyl-carrier protein] + an alcohol + H2O. Functionally, antioxidant protein with alkyl hydroperoxidase activity. Required for the reduction of the AhpC active site cysteine residues and for the regeneration of the AhpC enzyme activity. This chain is Alkyl hydroperoxide reductase AhpD, found in Caulobacter vibrioides (strain ATCC 19089 / CIP 103742 / CB 15) (Caulobacter crescentus).